The sequence spans 966 residues: Receptor protein-tyrosine kinase CEPR1 (966 aa).

Residues 1-22 (MRLKNFPFFVLFFFFCFNSNQS) form the signal peptide. The Extracellular portion of the chain corresponds to 23 to 592 (WGLMSSNQQP…QEPHGKKKLS (570 aa)). A glycan (N-linked (GlcNAc...) asparagine) is linked at Asn-61. LRR repeat units follow at residues 70–94 (QGLV…VCSY), 95–120 (FPNL…TIPN), 122–144 (SLLR…FSQM), 145–168 (KSLR…IFNL), 170–194 (DLEY…VSKL), 195–218 (TKLT…IGNL), 219–242 (TSLV…IGNL), 245–267 (LRQL…IGNL), 268–291 (KNLT…ICSL), 292–315 (PNLR…LGNS), 317–339 (TLKI…LGSS), 341–363 (PMIA…VCKS), 365–386 (KLLY…TYGS), 387–411 (CKTL…VMSL), 412–435 (PHVS…IGNA), 437–459 (NLSE…LSHS), 460–483 (TNLV…VGRL), 484–507 (RKLN…LSNL), 508–531 (KSLN…LSEL), and 533–554 (PTSI…LIRG). N-linked (GlcNAc...) asparagine glycosylation is found at Asn-109, Asn-120, Asn-128, and Asn-167. Asn-217 and Asn-241 each carry an N-linked (GlcNAc...) asparagine glycan. Residues Asn-269 and Asn-301 are each glycosylated (N-linked (GlcNAc...) asparagine). N-linked (GlcNAc...) asparagine glycosylation is present at Asn-437. N-linked (GlcNAc...) asparagine glycans are attached at residues Asn-527 and Asn-537. The chain crosses the membrane as a helical span at residues 593–613 (SIWAILVSVFILVLGVIMFYL). The Cytoplasmic segment spans residues 614-966 (RQRMSKNRAV…VSDHLTQTRL (353 aa)). Residues 656–934 (LVDKNIVGHG…TMNEVVQLLI (279 aa)) form the Protein kinase domain. Residues 662-670 (VGHGGSGTV) and Lys-684 contribute to the ATP site. A phosphotyrosine mark is found at Tyr-738 and Tyr-775. The active-site Proton acceptor is the Asp-788. 2 positions are modified to phosphotyrosine: Tyr-831 and Tyr-838. The tract at residues 937–966 (TPQGGPDMTSKPTTKIKDSIVSDHLTQTRL) is disordered.

The protein belongs to the protein kinase superfamily. Ser/Thr protein kinase family. Interacts with the root-derived peptides CEP1, CEP3 and CEP5. In terms of tissue distribution, expressed in the vasculature, especially in phloem and procambium regions, of stems, leaves, cotyledons, sepals, pedals, pedicels, hypocotyls and roots (in primary and lateral roots, but not in root tips). Expressed in the root from the basal meristem onward. Present in the phloem pole pericycle and in the adjacent phloem.

Its subcellular location is the cell membrane. The enzyme catalyses L-tyrosyl-[protein] + ATP = O-phospho-L-tyrosyl-[protein] + ADP + H(+). In terms of biological role, receptor kinase involved in the perception of C-terminally encoded plant signaling peptide (CEP) and subsequent regulation of root and shoot development. Required for xylem and phloem cell files morphology and organization, probably by preventing ectopic lignification in phloem cells. Together with CEPR2, mediates systemic nitrogen (N)-demand signaling upon the perception of root-derived peptides (e.g. CEP1) via the up-regulation of genes involved in N uptake and assimilation pathways. Positively regulates lateral root initiation and development; probably repressed by the signaling peptide CEP5. This chain is Receptor protein-tyrosine kinase CEPR1, found in Arabidopsis thaliana (Mouse-ear cress).